A 1062-amino-acid chain; its full sequence is SLIT-ROBO Rho GTPase-activating protein 1 (1062 aa).

Positions 19–314 (SQVKEIRAQL…AVDNLEPRSD (296 aa)) constitute an F-BAR domain. Residues 352–382 (QAELMLRNQQLQSRLATLKIESEEVKKTTEA) adopt a coiled-coil conformation. The residue at position 416 (S416) is a Phosphoserine. The Rho-GAP domain maps to 481–671 (GRRNSHARHQ…TIIIHHETIF (191 aa)). Positions 720 to 779 (CEPIEAIAKFDYVGRSARELSFKKGASLLLYHRASEDWWEGRHNGIDGLVPHQYIVVQDM) constitute an SH3 domain. Positions 785 to 799 (DTLSQKADSEASSGP) are enriched in polar residues. Positions 785-931 (DTLSQKADSE…TGFNDHKPLD (147 aa)) are disordered. Residues S812 and S894 each carry the phosphoserine modification. Over residues 899–908 (SRHDSLKKID) the composition is skewed to basic and acidic residues. Position 909 is a phosphoserine (S909). A compositionally biased stretch (polar residues) spans 914–923 (RSTSSGQYTG). Residues 933–960 (ETIAQDIEETMNTALNELRELERQSTVK) adopt a coiled-coil conformation. The segment covering 974–988 (KNSPTPATSTESLSP) has biased composition (polar residues). 2 disordered regions span residues 974–1013 (KNSP…ETMS) and 1028–1062 (KPPA…SCTM). At S976 the chain carries Phosphoserine. At T978 the chain carries Phosphothreonine. The segment covering 1004-1013 (STSSSSETMS) has biased composition (low complexity). S1009 carries the post-translational modification Phosphoserine. The span at 1053 to 1062 (QGPTDKSCTM) shows a compositional bias: polar residues.

Homodimer. Forms a heterooligomer with SRGAP2 and SRGAP3 through its F-BAR domain. Interacts with CDC42 and RHOA. Interacts with FASLG. Interacts (via SH3 domain) with ROBO1.

In terms of biological role, GTPase-activating protein for RhoA and Cdc42 small GTPases. Together with CDC42 seems to be involved in the pathway mediating the repulsive signaling of Robo and Slit proteins in neuronal migration. SLIT2, probably through interaction with ROBO1, increases the interaction of SRGAP1 with ROBO1 and inactivates CDC42. This is SLIT-ROBO Rho GTPase-activating protein 1 (Srgap1) from Mus musculus (Mouse).